Here is a 306-residue protein sequence, read N- to C-terminus: Porphobilinogen deaminase (306 aa).

S-(dipyrrolylmethanemethyl)cysteine is present on cysteine 239.

The protein belongs to the HMBS family. As to quaternary structure, monomer. It depends on dipyrromethane as a cofactor.

It catalyses the reaction 4 porphobilinogen + H2O = hydroxymethylbilane + 4 NH4(+). It participates in porphyrin-containing compound metabolism; protoporphyrin-IX biosynthesis; coproporphyrinogen-III from 5-aminolevulinate: step 2/4. In terms of biological role, tetrapolymerization of the monopyrrole PBG into the hydroxymethylbilane pre-uroporphyrinogen in several discrete steps. The chain is Porphobilinogen deaminase from Helicobacter acinonychis (strain Sheeba).